A 2358-amino-acid chain; its full sequence is Cell wall alpha-1,3-glucan synthase mok13 (2358 aa).

Residues 1645-1659 (EGLENEENELKDKAP) show a composition bias toward basic and acidic residues. The tract at residues 1645–1669 (EGLENEENELKDKAPPNEPNVGSLF) is disordered.

Belongs to the glycosyltransferase group 1 family.

It catalyses the reaction [(1-&gt;3)-alpha-D-glucosyl](n) + UDP-alpha-D-glucose = [(1-&gt;3)-alpha-D-glucosyl](n+1) + UDP + H(+). The chain is Cell wall alpha-1,3-glucan synthase mok13 (mok13) from Schizosaccharomyces pombe (strain 972 / ATCC 24843) (Fission yeast).